Reading from the N-terminus, the 212-residue chain is ATP-dependent dethiobiotin synthetase BioD (212 aa).

13–18 provides a ligand contact to ATP; the sequence is GVGKTV. Residue threonine 17 participates in Mg(2+) binding. The active site involves lysine 33. Residue glutamate 100 participates in Mg(2+) binding. ATP-binding positions include 100–103 and 184–186; these read EGAG and PHL.

Belongs to the dethiobiotin synthetase family. As to quaternary structure, homodimer. Mg(2+) serves as cofactor.

It localises to the cytoplasm. The enzyme catalyses (7R,8S)-7,8-diammoniononanoate + CO2 + ATP = (4R,5S)-dethiobiotin + ADP + phosphate + 3 H(+). It participates in cofactor biosynthesis; biotin biosynthesis; biotin from 7,8-diaminononanoate: step 1/2. Functionally, catalyzes a mechanistically unusual reaction, the ATP-dependent insertion of CO2 between the N7 and N8 nitrogen atoms of 7,8-diaminopelargonic acid (DAPA, also called 7,8-diammoniononanoate) to form a ureido ring. In Rhodopseudomonas palustris (strain BisB5), this protein is ATP-dependent dethiobiotin synthetase BioD.